Here is an 849-residue protein sequence, read N- to C-terminus: Serine/threonine-protein phosphatase 4 regulatory subunit 3B (849 aa).

One can recognise a WH1 domain in the interval methionine 1–valine 100. A phosphoserine mark is found at serine 117 and serine 695. The span at glutamate 714 to glutamate 724 shows a compositional bias: acidic residues. The interval glutamate 714–serine 849 is disordered. A compositionally biased stretch (basic and acidic residues) spans glutamate 733–proline 764. Residues phenylalanine 776–lysine 818 show a composition bias toward polar residues. Residues tyrosine 827–glutamate 838 show a composition bias toward acidic residues. Serine 840 is modified (phosphoserine).

Belongs to the SMEK family. Serine/threonine-protein phosphatase 4 (PP4) occurs in different assemblies of the catalytic and one or more regulatory subunits. Component of the PP4 complex PPP4C-PPP4R2-PPP4R3B. As to expression, moderately expressed in tissues and specific brain regions examined.

The protein resides in the cytoplasm. The protein localises to the cytoskeleton. It localises to the microtubule organizing center. Its subcellular location is the centrosome. It is found in the nucleus. Functionally, regulatory subunit of serine/threonine-protein phosphatase 4 (PP4). May regulate the activity of PPP4C at centrosomal microtubule organizing centers. The polypeptide is Serine/threonine-protein phosphatase 4 regulatory subunit 3B (Homo sapiens (Human)).